Reading from the N-terminus, the 206-residue chain is Small ribosomal subunit protein uS4 (206 aa).

Residues S96–A157 form the S4 RNA-binding domain.

It belongs to the universal ribosomal protein uS4 family. Part of the 30S ribosomal subunit. Contacts protein S5. The interaction surface between S4 and S5 is involved in control of translational fidelity.

Functionally, one of the primary rRNA binding proteins, it binds directly to 16S rRNA where it nucleates assembly of the body of the 30S subunit. With S5 and S12 plays an important role in translational accuracy. The polypeptide is Small ribosomal subunit protein uS4 (Alkalilimnicola ehrlichii (strain ATCC BAA-1101 / DSM 17681 / MLHE-1)).